The chain runs to 113 residues: MEARAVAKYVRVSPRKARQVIDLIRGKEIGEALGILKHTPKKASSIIEKVLNSAIANAENNHDMMVEDLYVSKAYVDEGPTMKRYRARAMGQAGLIRKRTSHITIVVSEKKEG.

Belongs to the universal ribosomal protein uL22 family. Part of the 50S ribosomal subunit.

This protein binds specifically to 23S rRNA; its binding is stimulated by other ribosomal proteins, e.g. L4, L17, and L20. It is important during the early stages of 50S assembly. It makes multiple contacts with different domains of the 23S rRNA in the assembled 50S subunit and ribosome. Functionally, the globular domain of the protein is located near the polypeptide exit tunnel on the outside of the subunit, while an extended beta-hairpin is found that lines the wall of the exit tunnel in the center of the 70S ribosome. The sequence is that of Large ribosomal subunit protein uL22 from Halothermothrix orenii (strain H 168 / OCM 544 / DSM 9562).